Reading from the N-terminus, the 409-residue chain is Glutamate--tRNA ligase 2 (409 aa).

A 'HIGH' region motif is present at residues 9-19; it reads PSPTGNLHIGG. The 'KMSKS' region signature appears at 198–202; sequence KLSKR. Residue K201 coordinates ATP.

This sequence belongs to the class-I aminoacyl-tRNA synthetase family. Glutamate--tRNA ligase type 1 subfamily. As to quaternary structure, monomer.

It localises to the cytoplasm. It carries out the reaction tRNA(Glu) + L-glutamate + ATP = L-glutamyl-tRNA(Glu) + AMP + diphosphate. In terms of biological role, catalyzes the attachment of glutamate to tRNA(Glu) in a two-step reaction: glutamate is first activated by ATP to form Glu-AMP and then transferred to the acceptor end of tRNA(Glu). This Neorickettsia sennetsu (strain ATCC VR-367 / Miyayama) (Ehrlichia sennetsu) protein is Glutamate--tRNA ligase 2.